Reading from the N-terminus, the 177-residue chain is Keratin-associated protein 1-1 (177 aa).

Belongs to the KRTAP type 1 family. As to quaternary structure, interacts with hair keratins. Expressed in the middle/upper portions of the hair cortex, in the region termed the keratogenous zone.

Functionally, in the hair cortex, hair keratin intermediate filaments are embedded in an interfilamentous matrix, consisting of hair keratin-associated proteins (KRTAP), which are essential for the formation of a rigid and resistant hair shaft through their extensive disulfide bond cross-linking with abundant cysteine residues of hair keratins. The matrix proteins include the high-sulfur and high-glycine-tyrosine keratins. In Homo sapiens (Human), this protein is Keratin-associated protein 1-1 (KRTAP1-1).